A 329-amino-acid chain; its full sequence is Beta-ketoacyl-[acyl-carrier-protein] synthase III (329 aa).

Residues cysteine 123 and histidine 256 contribute to the active site. The ACP-binding stretch occupies residues 257-261 (QANIR). Residue asparagine 286 is part of the active site.

The protein belongs to the thiolase-like superfamily. FabH family. In terms of assembly, homodimer.

The protein resides in the cytoplasm. The catalysed reaction is malonyl-[ACP] + acetyl-CoA + H(+) = 3-oxobutanoyl-[ACP] + CO2 + CoA. The protein operates within lipid metabolism; fatty acid biosynthesis. Catalyzes the condensation reaction of fatty acid synthesis by the addition to an acyl acceptor of two carbons from malonyl-ACP. Catalyzes the first condensation reaction which initiates fatty acid synthesis and may therefore play a role in governing the total rate of fatty acid production. Possesses both acetoacetyl-ACP synthase and acetyl transacylase activities. Its substrate specificity determines the biosynthesis of branched-chain and/or straight-chain of fatty acids. In Burkholderia cenocepacia (strain HI2424), this protein is Beta-ketoacyl-[acyl-carrier-protein] synthase III.